Reading from the N-terminus, the 634-residue chain is Chaperone protein DnaK (634 aa).

Thr-197 is subject to Phosphothreonine; by autocatalysis. A compositionally biased stretch (basic and acidic residues) spans 515 to 528 (LHKEDDKKRKESVD). 2 disordered regions span residues 515–536 (LHKEDDKKRKESVDARNGADAI) and 595–634 (YKAASAGKNAGGTAGGNGNAGSNGNSGAKKDDDVIDAEVE). A compositionally biased stretch (gly residues) spans 603 to 615 (NAGGTAGGNGNAG).

It belongs to the heat shock protein 70 family.

Acts as a chaperone. The sequence is that of Chaperone protein DnaK from Campylobacter hominis (strain ATCC BAA-381 / DSM 21671 / CCUG 45161 / LMG 19568 / NCTC 13146 / CH001A).